The sequence spans 407 residues: Substance-P receptor (407 aa).

The Extracellular segment spans residues 1–31 (MDNVLQVDSDLFPNISTNTSEPNQFVQPAWQ). N-linked (GlcNAc...) asparagine glycosylation is found at Asn-14 and Asn-18. A helical transmembrane segment spans residues 32–54 (IVLWAAAYTVIVVTSVVGNVVVM). The Cytoplasmic segment spans residues 55 to 64 (WIILAHKRMR). Residues 65–86 (TVTNYFLVNLAFAEASMAAFNT) form a helical membrane-spanning segment. At 87 to 106 (VVNFTYAVHNEWYYGLFYCK) the chain is on the extracellular side. An intrachain disulfide couples Cys-105 to Cys-180. Residues 107–128 (FHNFFPIAAVFASIYSMTAVAF) form a helical membrane-spanning segment. Residues 129 to 148 (DRYMAIIHPLQPRLSATATK) are Cytoplasmic-facing. A helical membrane pass occupies residues 149-169 (VVICVIWVLALLLAFPQGYYS). Residues 170-194 (TTETMPNRVVCMIEWPEHPNKIYEK) lie on the Extracellular side of the membrane. Residues 195–219 (VYHICVTVLIYFLPLLVIGYAYTVV) form a helical membrane-spanning segment. Topologically, residues 220–248 (GITLWASEIPGDSSDRYHEQVSAKRKVVK) are cytoplasmic. Residues 249–270 (MMIVVVCTFAICWLPFHIFFLL) traverse the membrane as a helical segment. The Extracellular portion of the chain corresponds to 271–283 (PYINPDLYLEKFI). A helical transmembrane segment spans residues 284-308 (QQVYLAIMWLAMSSTMYNPIIYCCL). Residues 309–407 (NDRFRLGFKH…SFSFYSNMLS (99 aa)) are Cytoplasmic-facing. Residue Cys-322 is the site of S-palmitoyl cysteine attachment. Positions 365 to 394 (HEEELEDGPKTTPSSLDLTSNGSSRSDSKT) are disordered. The segment covering 375 to 394 (TTPSSLDLTSNGSSRSDSKT) has biased composition (polar residues).

The protein belongs to the G-protein coupled receptor 1 family. In terms of assembly, interacts with ARRB1.

The protein resides in the cell membrane. This is a receptor for the tachykinin neuropeptide substance P. It is probably associated with G proteins that activate a phosphatidylinositol-calcium second messenger system. The chain is Substance-P receptor (TACR1) from Canis lupus familiaris (Dog).